We begin with the raw amino-acid sequence, 368 residues long: Transaldolase (368 aa).

Lys-140 (schiff-base intermediate with substrate) is an active-site residue.

Belongs to the transaldolase family. Type 2 subfamily.

The protein resides in the cytoplasm. The enzyme catalyses D-sedoheptulose 7-phosphate + D-glyceraldehyde 3-phosphate = D-erythrose 4-phosphate + beta-D-fructose 6-phosphate. Its pathway is carbohydrate degradation; pentose phosphate pathway; D-glyceraldehyde 3-phosphate and beta-D-fructose 6-phosphate from D-ribose 5-phosphate and D-xylulose 5-phosphate (non-oxidative stage): step 2/3. Its function is as follows. Transaldolase is important for the balance of metabolites in the pentose-phosphate pathway. The polypeptide is Transaldolase (Thermobifida fusca (strain YX)).